Consider the following 338-residue polypeptide: RNA 3'-terminal phosphate cyclase (338 aa).

ATP-binding positions include Gln103 and 283–287 (YLADQ). His308 functions as the Tele-AMP-histidine intermediate in the catalytic mechanism.

Belongs to the RNA 3'-terminal cyclase family. Type 1 subfamily.

The protein localises to the cytoplasm. It catalyses the reaction a 3'-end 3'-phospho-ribonucleotide-RNA + ATP = a 3'-end 2',3'-cyclophospho-ribonucleotide-RNA + AMP + diphosphate. Functionally, catalyzes the conversion of 3'-phosphate to a 2',3'-cyclic phosphodiester at the end of RNA. The mechanism of action of the enzyme occurs in 3 steps: (A) adenylation of the enzyme by ATP; (B) transfer of adenylate to an RNA-N3'P to produce RNA-N3'PP5'A; (C) and attack of the adjacent 2'-hydroxyl on the 3'-phosphorus in the diester linkage to produce the cyclic end product. The biological role of this enzyme is unknown but it is likely to function in some aspects of cellular RNA processing. This Escherichia coli O127:H6 (strain E2348/69 / EPEC) protein is RNA 3'-terminal phosphate cyclase.